The following is a 193-amino-acid chain: uncharacterized protein (193 aa).

A helical transmembrane segment spans residues 119 to 143 (LAGSLLAATGMTLGIFGMGITGTCW).

The protein localises to the mitochondrion membrane. This is an uncharacterized protein from Saccharomyces cerevisiae (strain ATCC 204508 / S288c) (Baker's yeast).